A 38-amino-acid chain; its full sequence is Photosystem II reaction center protein L (38 aa).

A helical transmembrane segment spans residues serine 17–phenylalanine 37.

This sequence belongs to the PsbL family. PSII is composed of 1 copy each of membrane proteins PsbA, PsbB, PsbC, PsbD, PsbE, PsbF, PsbH, PsbI, PsbJ, PsbK, PsbL, PsbM, PsbT, PsbX, PsbY, PsbZ, Psb30/Ycf12, at least 3 peripheral proteins of the oxygen-evolving complex and a large number of cofactors. It forms dimeric complexes.

Its subcellular location is the plastid. The protein resides in the chloroplast thylakoid membrane. Its function is as follows. One of the components of the core complex of photosystem II (PSII). PSII is a light-driven water:plastoquinone oxidoreductase that uses light energy to abstract electrons from H(2)O, generating O(2) and a proton gradient subsequently used for ATP formation. It consists of a core antenna complex that captures photons, and an electron transfer chain that converts photonic excitation into a charge separation. This subunit is found at the monomer-monomer interface and is required for correct PSII assembly and/or dimerization. The polypeptide is Photosystem II reaction center protein L (Tetradesmus obliquus (Green alga)).